The chain runs to 359 residues: MQVPNSTGPDNATLQMLRNPAIAVALPVVYSLVAAVSIPGNLFSLWVLCRRMGPRSPSVIFMINLSVTDLMLASVLPFQIYYHCNRHHWVFGVLLCNVVTVAFYANMYSSILTMTCISVERFLGVLYPLSSKRWRRRRYAVAACAGTWLLLLTALSPLARTDLTYPVHALGIITCFDVLKWTMLPSVAMWAVFLFTIFILLFLIPFVITVACYTATILKLLRTEEAHGREQRRRAVGLAAVVLLAFVTCFAPNNFVLLAHIVSRLFYGKSYYHVYKLTLCLSCLNNCLDPFVYYFASREFQLRLREYLGCRRVPRDTLDTRRESLFSARTTSVRSEAGAHPEGMEGATRPGLQRQESVF.

Topologically, residues 1–19 (MQVPNSTGPDNATLQMLRN) are extracellular. 2 N-linked (GlcNAc...) asparagine glycosylation sites follow: Asn5 and Asn11. The helical transmembrane segment at 20–40 (PAIAVALPVVYSLVAAVSIPG) threads the bilayer. At 41-57 (NLFSLWVLCRRMGPRSP) the chain is on the cytoplasmic side. The helical transmembrane segment at 58 to 78 (SVIFMINLSVTDLMLASVLPF) threads the bilayer. The Extracellular portion of the chain corresponds to 79-88 (QIYYHCNRHH). Residues 89-109 (WVFGVLLCNVVTVAFYANMYS) form a helical membrane-spanning segment. Topologically, residues 110–138 (SILTMTCISVERFLGVLYPLSSKRWRRRR) are cytoplasmic. Residues 139-159 (YAVAACAGTWLLLLTALSPLA) form a helical membrane-spanning segment. At 160 to 187 (RTDLTYPVHALGIITCFDVLKWTMLPSV) the chain is on the extracellular side. A helical membrane pass occupies residues 188 to 208 (AMWAVFLFTIFILLFLIPFVI). Residues 209–237 (TVACYTATILKLLRTEEAHGREQRRRAVG) are Cytoplasmic-facing. The helical transmembrane segment at 238 to 258 (LAAVVLLAFVTCFAPNNFVLL) threads the bilayer. Over 259 to 275 (AHIVSRLFYGKSYYHVY) the chain is Extracellular. A helical membrane pass occupies residues 276–296 (KLTLCLSCLNNCLDPFVYYFA). The Cytoplasmic portion of the chain corresponds to 297-359 (SREFQLRLRE…PGLQRQESVF (63 aa)). The disordered stretch occupies residues 329-359 (RTTSVRSEAGAHPEGMEGATRPGLQRQESVF).

The protein belongs to the G-protein coupled receptor 1 family. In terms of tissue distribution, barely detectable in normal blood leukocytes. Weaker expression was seen in heart, kidney and lung. Not detected in brain. Expressed in B cells and follicular helper T cells in germinal centers (at protein level).

The protein localises to the cell membrane. Its function is as follows. G protein-coupled receptor for S-geranylgeranyl-glutathione (GGG), an endogenous metabolite present in lymphoid tissues. Couples the binding of GGG to the activation of GNA13 and downstream repression of AKT activation in lymphocytes defining their positioning and growth within lymphoid organs. In lymphoid follicles, confines B cells and follicular helper T cells in germinal centers (GCs) in response to GGG local gradients established by GGT5 (via GGG catabolism) and ABCC1 (via extracellular transport) with lower concentrations of GGG found in the follicular dendritic cell network region around which germinal centers are formed. In the bone marrow, also in response to GGG gradients established by GGT5 and ABCC1, it restricts chemotactic transmigration of B cells, T cells and NK cells from blood vessels to the bone marrow parenchyma. Contributes to GNA13-dependent pathway that suppresses GC B cell growth. The chain is S-geranylgeranyl-glutathione receptor P2RY8 from Homo sapiens (Human).